The following is a 407-amino-acid chain: Imidazolonepropionase (407 aa).

Residues H72 and H74 each coordinate Fe(3+). The Zn(2+) site is built by H72 and H74. R81, Y144, and H177 together coordinate 4-imidazolone-5-propanoate. Y144 is a binding site for N-formimidoyl-L-glutamate. Residue H242 participates in Fe(3+) binding. A Zn(2+)-binding site is contributed by H242. Q245 is a binding site for 4-imidazolone-5-propanoate. D317 is a Fe(3+) binding site. D317 lines the Zn(2+) pocket. Residues N319 and G321 each contribute to the N-formimidoyl-L-glutamate site. T322 is a 4-imidazolone-5-propanoate binding site.

The protein belongs to the metallo-dependent hydrolases superfamily. HutI family. It depends on Zn(2+) as a cofactor. Requires Fe(3+) as cofactor.

It is found in the cytoplasm. It carries out the reaction 4-imidazolone-5-propanoate + H2O = N-formimidoyl-L-glutamate. Its pathway is amino-acid degradation; L-histidine degradation into L-glutamate; N-formimidoyl-L-glutamate from L-histidine: step 3/3. Catalyzes the hydrolytic cleavage of the carbon-nitrogen bond in imidazolone-5-propanoate to yield N-formimidoyl-L-glutamate. It is the third step in the universal histidine degradation pathway. The polypeptide is Imidazolonepropionase (Aliivibrio salmonicida (strain LFI1238) (Vibrio salmonicida (strain LFI1238))).